We begin with the raw amino-acid sequence, 169 residues long: Ribosome maturation factor RimM (169 aa).

In terms of domain architecture, PRC barrel spans 97–169; it reads EDEYYWADLV…TITADWGLDY (73 aa).

The protein belongs to the RimM family. Binds ribosomal protein uS19.

The protein resides in the cytoplasm. Functionally, an accessory protein needed during the final step in the assembly of 30S ribosomal subunit, possibly for assembly of the head region. Essential for efficient processing of 16S rRNA. May be needed both before and after RbfA during the maturation of 16S rRNA. It has affinity for free ribosomal 30S subunits but not for 70S ribosomes. The sequence is that of Ribosome maturation factor RimM from Neisseria gonorrhoeae (strain ATCC 700825 / FA 1090).